We begin with the raw amino-acid sequence, 295 residues long: Ribosomal protein L11 methyltransferase (295 aa).

4 residues coordinate S-adenosyl-L-methionine: Thr150, Gly171, Asp193, and Asn232.

The protein belongs to the methyltransferase superfamily. PrmA family.

The protein localises to the cytoplasm. The enzyme catalyses L-lysyl-[protein] + 3 S-adenosyl-L-methionine = N(6),N(6),N(6)-trimethyl-L-lysyl-[protein] + 3 S-adenosyl-L-homocysteine + 3 H(+). In terms of biological role, methylates ribosomal protein L11. This is Ribosomal protein L11 methyltransferase from Neisseria meningitidis serogroup B (strain ATCC BAA-335 / MC58).